The chain runs to 172 residues: Podoplanin (172 aa).

An N-terminal signal peptide occupies residues 1 to 22 (MWTVPVLFWVLGSVWFWDSAQG). The Extracellular segment spans residues 23–141 (GTIGVNEDDI…KKDGLPVVTL (119 aa)). Residues Thr37, Thr51, Thr52, Thr53, and Thr56 are each glycosylated (O-linked (GalNAc...) threonine). Residues 49–132 (KITTTGATGG…AGDETQTTDK (84 aa)) form a disordered region. The span at 51-63 (TTTGATGGLNEST) shows a compositional bias: polar residues. N-linked (GlcNAc...) asparagine glycosylation occurs at Asn60. O-linked (GalNAc...) threonine glycosylation is found at Thr63, Thr71, and Thr77. A compositionally biased stretch (basic and acidic residues) spans 72 to 81 (QRERGTKPPL). An O-linked (GalNAc...) serine glycan is attached at Ser85. Residue Thr86 is glycosylated (O-linked (GalNAc...) threonine). A glycan (O-linked (GalNAc...) serine) is linked at Ser87. O-linked (GalNAc...) threonine glycosylation is present at Thr89. Ser90 carries O-linked (GalNAc...) serine glycosylation. Basic and acidic residues predominate over residues 90 to 99 (SDHDHREHES). 5 O-linked (GalNAc...) threonine glycosylation sites follow: Thr100, Thr101, Thr102, Thr107, and Thr115. A compositionally biased stretch (low complexity) spans 100–109 (TTTVKVVTSH). Residues 110 to 132 (SVDKKTSHPNRDNAGDETQTTDK) show a composition bias toward basic and acidic residues. A helical transmembrane segment spans residues 142–162 (VGIIVGVLLAIGFVGGIFIVV). Residues 143-147 (GIIVG) form a requires for dimerization and lipidd rafts association region. Residues 163–172 (MKKISGRFSP) lie on the Cytoplasmic side of the membrane. The interval 164-165 (KK) is requires for interaction with MSN and EZR.

Belongs to the podoplanin family. As to quaternary structure, homodimer. Interacts with CLEC1B; the interaction is independent of CLEC1B glycosylation and activates CLEC1B; the interaction is dependent of sialic acid on O-glycans. Interacts with CD9; this interaction is homophilic and attenuates platelet aggregation and pulmonary metastasis induced by PDPN. Interacts with LGALS8; the interaction is glycosylation-dependent; may participate in connection of the lymphatic endothelium to the surrounding extracellular matrix. Interacts with HSPA9. Interacts (via extracellular domain) with CD44; this interaction is required for PDPN-mediated directional migration and regulation of lamellipodia extension/stabilization during cell spreading and migration. Interacts (via cytoplasmic domain) with MSN and EZR; activates RHOA and promotes epithelial-mesenchymal transition. Interacts with CCL21; relocalized PDPN to the basolateral membrane. In terms of processing, extensively O-glycosylated. Contains sialic acid residues. O-glycosylation is necessary for platelet aggregation activity. Disialylated at Thr-52; sialic acid is critical for platelet-aggregating activity and for CLEC1B interaction. Post-translationally, phosphorylated by PKA; decreases cell migration. The N-terminus is blocked. Detected at high levels in lung and brain, at lower levels in kidney, stomach, liver, spleen and esophagus, and not detected in skin and small intestine. Expressed in epithelial cells of choroid plexus, ependyma, glomerulus and alveolus, in mesothelial cells and in endothelia of lymphatic vessels. Also expressed in stromal cells of peripheral lymphoid tissue and thymic epithelial cells. Detected in carcinoma cell lines and cultured fibroblasts. Expressed at higher levels in colon carcinomas than in normal colon tissue.

The protein resides in the membrane. The protein localises to the cell projection. It is found in the lamellipodium membrane. Its subcellular location is the filopodium membrane. It localises to the microvillus membrane. The protein resides in the ruffle membrane. The protein localises to the membrane raft. It is found in the apical cell membrane. Its subcellular location is the basolateral cell membrane. It localises to the invadopodium. Its function is as follows. Mediates effects on cell migration and adhesion through its different partners. During development plays a role in blood and lymphatic vessels separation by binding CLEC1B, triggering CLEC1B activation in platelets and leading to platelet activation and/or aggregation. Interaction with CD9, on the contrary, attenuates platelet aggregation and pulmonary metastasis induced by PDPN. Mediates effects on cell migration and adhesion through its different partners. Through MSN or EZR interaction promotes epithelial-mesenchymal transition (EMT) leading to ERZ phosphorylation and triggering RHOA activation leading to cell migration increase and invasiveness. Interaction with CD44 promotes directional cell migration in epithelial and tumor cells. In lymph nodes (LNs), controls fibroblastic reticular cells (FRCs) adhesion to the extracellular matrix (ECM) and contraction of the actomyosin by maintaining ERM proteins (EZR; MSN and RDX) and MYL9 activation through association with unknown transmembrane proteins. Engagement of CLEC1B by PDPN promotes FRCs relaxation by blocking lateral membrane interactions leading to reduction of ERM proteins (EZR; MSN and RDX) and MYL9 activation. Through binding with LGALS8 may participate in connection of the lymphatic endothelium to the surrounding extracellular matrix. In keratinocytes, induces changes in cell morphology showing an elongated shape, numerous membrane protrusions, major reorganization of the actin cytoskeleton, increased motility and decreased cell adhesion. Controls invadopodia stability and maturation leading to efficient degradation of the extracellular matrix (ECM) in tumor cells through modulation of RHOC activity in order to activate ROCK1/ROCK2 and LIMK1/LIMK2 and inactivation of CFL1. Required for normal lung cell proliferation and alveolus formation at birth. Does not function as a water channel or as a regulator of aquaporin-type water channels. Does not have any effect on folic acid or amino acid transport. This chain is Podoplanin, found in Mus musculus (Mouse).